A 227-amino-acid polypeptide reads, in one-letter code: DNA utilization protein YhgH (227 aa).

Belongs to the ComF/GntX family.

Functionally, required for the use of extracellular DNA as a nutrient. Has been suggested to be involved in gluconate metabolism. The sequence is that of DNA utilization protein YhgH from Escherichia coli (strain K12).